A 953-amino-acid chain; its full sequence is Pyruvate, phosphate dikinase, chloroplastic (953 aa).

The N-terminal 77 residues, M1–T77, are a transit peptide targeting the chloroplast. The segment at P55–P74 is disordered. Residue T533 is modified to Phosphothreonine; by PDRP1. H535 serves as the catalytic Tele-phosphohistidine intermediate. 7 residues coordinate substrate: R641, R698, E827, G848, T849, N850, and D851. E827 is a binding site for Mg(2+). A Mg(2+)-binding site is contributed by D851. The Proton donor role is filled by C913.

The protein belongs to the PEP-utilizing enzyme family. In terms of assembly, homotetramer. Mg(2+) serves as cofactor. Post-translationally, phosphorylation of Thr-533 in the dark inactivates the enzyme. Dephosphorylation upon light stimulation reactivates the enzyme. In terms of tissue distribution, isoform 1 mainly localized in mesophyll cells and only a low level is found in bundle sheath cells. Isoform 2 is expressed in roots and stems.

The protein resides in the plastid. The protein localises to the chloroplast. Its subcellular location is the cytoplasm. It carries out the reaction pyruvate + phosphate + ATP = phosphoenolpyruvate + AMP + diphosphate + H(+). It functions in the pathway photosynthesis; C4 acid pathway. Activated by light-induced dephosphorylation. Inhibited by dark-induced phosphorylation. Both reactions are catalyzed by PDRP1. Formation of phosphoenolpyruvate, which is the primary acceptor of CO(2) in C4 and some Crassulacean acid metabolism plants. This is Pyruvate, phosphate dikinase, chloroplastic (PPDK) from Flaveria trinervia (Clustered yellowtops).